Here is a 523-residue protein sequence, read N- to C-terminus: UDP-glucuronosyltransferase 2B16 (523 aa).

The N-terminal stretch at 1–16 (LLLLLQLSCCFSSGSC) is a signal peptide. An N6-succinyllysine modification is found at Lys129. An N-linked (GlcNAc...) asparagine glycan is attached at Asn309. A helical transmembrane segment spans residues 487–503 (VIGFLLACLTITTYLVI).

This sequence belongs to the UDP-glycosyltransferase family.

The protein localises to the microsome membrane. It localises to the endoplasmic reticulum membrane. It carries out the reaction glucuronate acceptor + UDP-alpha-D-glucuronate = acceptor beta-D-glucuronoside + UDP + H(+). UDPGT is of major importance in the conjugation and subsequent elimination of potentially toxic xenobiotics and endogenous compounds. Acts on small phenolic agents such as 2-beta-naphthol and 4-methylumbelliferone as well as bulky phenolic compounds like 2-hydroxy- and 4-hydroxybiphenyl. In contrast to 2B13 it is active toward 4-hydroxyesterone. This Oryctolagus cuniculus (Rabbit) protein is UDP-glucuronosyltransferase 2B16 (UGT2B16).